The sequence spans 619 residues: Pentatricopeptide repeat-containing protein At3g22470, mitochondrial (619 aa).

Residues methionine 1–tyrosine 28 constitute a mitochondrion transit peptide. PPR repeat units follow at residues threonine 69 to histidine 103, aspartate 104 to proline 138, aspartate 139 to proline 173, aspartate 174 to proline 208, aspartate 209 to alanine 243, serine 244 to alanine 278, aspartate 279 to proline 313, aspartate 314 to proline 348, aspartate 349 to proline 383, aspartate 384 to proline 418, asparagine 419 to proline 453, serine 454 to leucine 488, glycine 489 to proline 523, aspartate 524 to proline 558, and aspartate 559 to alanine 593.

The protein belongs to the PPR family. P subfamily.

Its subcellular location is the mitochondrion. The sequence is that of Pentatricopeptide repeat-containing protein At3g22470, mitochondrial from Arabidopsis thaliana (Mouse-ear cress).